An 89-amino-acid chain; its full sequence is Small ribosomal subunit protein uS17 (89 aa).

It belongs to the universal ribosomal protein uS17 family. Part of the 30S ribosomal subunit.

Functionally, one of the primary rRNA binding proteins, it binds specifically to the 5'-end of 16S ribosomal RNA. The sequence is that of Small ribosomal subunit protein uS17 from Nocardia farcinica (strain IFM 10152).